A 269-amino-acid polypeptide reads, in one-letter code: Ribosomal RNA small subunit methyltransferase J (269 aa).

Residues 125–126 (ER) and D179 contribute to the S-adenosyl-L-methionine site.

Belongs to the methyltransferase superfamily. RsmJ family.

The protein localises to the cytoplasm. The catalysed reaction is guanosine(1516) in 16S rRNA + S-adenosyl-L-methionine = N(2)-methylguanosine(1516) in 16S rRNA + S-adenosyl-L-homocysteine + H(+). Functionally, specifically methylates the guanosine in position 1516 of 16S rRNA. This is Ribosomal RNA small subunit methyltransferase J from Pseudomonas savastanoi pv. phaseolicola (strain 1448A / Race 6) (Pseudomonas syringae pv. phaseolicola (strain 1448A / Race 6)).